Reading from the N-terminus, the 363-residue chain is Ribosomal RNA large subunit methyltransferase M (363 aa).

S-adenosyl-L-methionine is bound by residues Ser-190, 223 to 226 (CPGG), Asp-242, Asp-262, and Asp-279. Lys-308 functions as the Proton acceptor in the catalytic mechanism.

Belongs to the class I-like SAM-binding methyltransferase superfamily. RNA methyltransferase RlmE family. RlmM subfamily. In terms of assembly, monomer.

It is found in the cytoplasm. The enzyme catalyses cytidine(2498) in 23S rRNA + S-adenosyl-L-methionine = 2'-O-methylcytidine(2498) in 23S rRNA + S-adenosyl-L-homocysteine + H(+). Catalyzes the 2'-O-methylation at nucleotide C2498 in 23S rRNA. This is Ribosomal RNA large subunit methyltransferase M from Aliivibrio salmonicida (strain LFI1238) (Vibrio salmonicida (strain LFI1238)).